We begin with the raw amino-acid sequence, 369 residues long: Cytochrome b561 and DOMON domain-containing protein At3g07570 (369 aa).

Residues 1–22 form the signal peptide; the sequence is MKLYSVSIIIFVLIALSTIVNA. The DOMON domain maps to 55–167; sequence QNFILRYART…PRQSLLYAVG (113 aa). A Cytochrome b561 domain is found at 174 to 369; it reads SSPDFRLREH…GLEVRKFLKK (196 aa). The helical transmembrane segment at 212–232 threads the bilayer; sequence THGLMNMFGWGILIIVGAIVA. Heme b is bound by residues His213 and His246. 2 consecutive transmembrane segments (helical) span residues 247–267 and 279–299; these read IALQ…GLVL and HKGL…ALLA. Residues His279 and His315 each coordinate heme b. 2 helical membrane-spanning segments follow: residues 321-341 and 343-363; these read LLII…KAGT and WNGG…GLEV.

It depends on heme b as a cofactor.

Its subcellular location is the membrane. Functionally, may act as a catecholamine-responsive trans-membrane electron transporter. The protein is Cytochrome b561 and DOMON domain-containing protein At3g07570 of Arabidopsis thaliana (Mouse-ear cress).